Here is a 927-residue protein sequence, read N- to C-terminus: MLKKLWICISCIVTTALSDHITFSPPDEAFVLFHSHQNTNFTSVFVQDGCPNSRNLMATVYSADLSSSRRVFEEIPLHCAVRVRIITEKVVVTRPYVDLLAVVDESLSRHVGAICVHAQLTSSTSAIELGKCYLNRHEDQKSSCVIRIPVPFSWFPVDQNRTSVLSVSYTVSEKCDQNFHDLPQHLIEVNSRIAKQKIDWLANATETSVTLLSTASQAFSQNSMQTLFLHVKSWANETQPMEIRLWVDSRMSIETVYPTSSNWTIRVSSASRPFFYTSLVCTPKERMTGFNDNIVAILIKMVSSTDAIKDDVILHWHVILGPKSSEPPPDDHKVATKFSVIADEVAAVVIVPKRKELMNLAVISGIQVTSSLRIFTISIGAKAEDVTTQSHCISSDANIIKVSPTCSSVYLDGSESNGSSDAQVYAHYLRYTTTYSFRVWFPKLPLKIWMSSSTLSTIKNWKVGFWRDLPLGGGVKRSRAARQFACVNRFQHSHVKVLASLWIEDIKTGDQLYLSSHKSILFDVTNIVHNTLQISNRTVANVKFYEGRAKVIGENVGLAKLIVRNAKKSMDLVSENISVQNKEVSTTGLSARPICDTSFRILPILFSPAFFKVEIAHSKSLTKLYQQCSIFASVSYSDATWEPLNDLDSSYFEMSAHSDNERALAVSHHASKVHVIAIDENWPLPVVEISLQSSAQCASTINGASPAALAVTVLNVPIKINNSFPSATDLDSSFSTTIAPSDSLPSIPFHIFVLTIIGLIILFLFISFVRRSAAFKGYEQLVVPFFSRLSSSSGSNSRQEETNEWVWLSQPQPPSSTISSGYSGNKSTAERQSSNGDDPSRTSISYHGSEISVFIAPSQGNVVVNQSSRHPRYTLVDSNSDHNLARIVPKEDRWTTGGHEQFHTWTWKQRGGGGGRMMEAPIRESIA.

Residues 1-18 form the signal peptide; sequence MLKKLWICISCIVTTALS. Residues 749 to 769 traverse the membrane as a helical segment; the sequence is FHIFVLTIIGLIILFLFISFV. The segment at 789-842 is disordered; that stretch reads LSSSSGSNSRQEETNEWVWLSQPQPPSSTISSGYSGNKSTAERQSSNGDDPSRT. The segment covering 817–842 has biased composition (polar residues); that stretch reads TISSGYSGNKSTAERQSSNGDDPSRT.

Belongs to the TMEM132 family. As to quaternary structure, interacts with gex-3. In terms of tissue distribution, specifically expressed in neurons.

Its subcellular location is the membrane. Functionally, regulates neuronal morphology via inhibition of the WAVE regulatory complex (WCR), a complex that controls F-actin cytoskeletal dynamics. The polypeptide is Transmembrane protein 132 homolog (Caenorhabditis elegans).